The chain runs to 397 residues: Carbamoyl phosphate synthase small chain (397 aa).

Positions 1 to 204 (MSPLLPSFPF…PAYRTLDTSK (204 aa)) are CPSase. The L-glutamine site is built by serine 53, glycine 256, and glycine 258. In terms of domain architecture, Glutamine amidotransferase type-1 spans 208-395 (KVVAYDFGVK…MELMNAAKKE (188 aa)). Cysteine 284 acts as the Nucleophile in catalysis. Residues leucine 285, glutamine 288, asparagine 326, glycine 328, and phenylalanine 329 each coordinate L-glutamine. Active-site residues include histidine 368 and glutamate 370.

It belongs to the CarA family. Composed of two chains; the small (or glutamine) chain promotes the hydrolysis of glutamine to ammonia, which is used by the large (or ammonia) chain to synthesize carbamoyl phosphate. Tetramer of heterodimers (alpha,beta)4.

It carries out the reaction hydrogencarbonate + L-glutamine + 2 ATP + H2O = carbamoyl phosphate + L-glutamate + 2 ADP + phosphate + 2 H(+). The enzyme catalyses L-glutamine + H2O = L-glutamate + NH4(+). The protein operates within amino-acid biosynthesis; L-arginine biosynthesis; carbamoyl phosphate from bicarbonate: step 1/1. It functions in the pathway pyrimidine metabolism; UMP biosynthesis via de novo pathway; (S)-dihydroorotate from bicarbonate: step 1/3. Functionally, small subunit of the glutamine-dependent carbamoyl phosphate synthetase (CPSase). CPSase catalyzes the formation of carbamoyl phosphate from the ammonia moiety of glutamine, carbonate, and phosphate donated by ATP, constituting the first step of 2 biosynthetic pathways, one leading to arginine and/or urea and the other to pyrimidine nucleotides. The small subunit (glutamine amidotransferase) binds and cleaves glutamine to supply the large subunit with the substrate ammonia. The sequence is that of Carbamoyl phosphate synthase small chain from Polynucleobacter asymbioticus (strain DSM 18221 / CIP 109841 / QLW-P1DMWA-1) (Polynucleobacter necessarius subsp. asymbioticus).